Here is a 423-residue protein sequence, read N- to C-terminus: Serine/threonine-protein kinase ppk25 (423 aa).

A phosphoserine mark is found at serine 36 and serine 38. The 253-residue stretch at 53–305 (WIIKKTIGAG…LEQAAKFPWL (253 aa)) folds into the Protein kinase domain. Residues 59–67 (IGAGSMGKV) and lysine 82 contribute to the ATP site. Aspartate 175 functions as the Proton acceptor in the catalytic mechanism.

The protein belongs to the protein kinase superfamily. Ser/Thr protein kinase family.

It localises to the cytoplasm. The catalysed reaction is L-seryl-[protein] + ATP = O-phospho-L-seryl-[protein] + ADP + H(+). It catalyses the reaction L-threonyl-[protein] + ATP = O-phospho-L-threonyl-[protein] + ADP + H(+). The sequence is that of Serine/threonine-protein kinase ppk25 (ppk25) from Schizosaccharomyces pombe (strain 972 / ATCC 24843) (Fission yeast).